The sequence spans 104 residues: Fusaric acid biosynthesis protein 2 (104 aa).

The protein belongs to the YciI family.

It participates in mycotoxin biosynthesis. Functionally, part of the gene cluster that mediates the biosynthesis of fusaric acid, a mycotoxin with low to moderate toxicity to animals and humans, but with high phytotoxic properties. L-aspartate is suggested as fusaric acid amino acid precursor that is activated and further processed to O-acetyl-L-homoserine by cluster enzymes aspartate kinase FUB3 and homoserine O-acetyltransferase FUB5, as well as enzymes of the primary metabolism. The polyketide synthase (PKS) FUB1 generates the triketide trans-2-hexenal which is presumptively released by the hydrolase FUB4 and linked to the NRPS-bound amino acid precursor by NAD(P)-dependent dehydrogenase FUB6. FUB1, FUB4, and the non-canonical NRPS Fub8 may form an enzyme complex. Further processing of the NRPS-bound intermediate might be carried out by FUB6 and the sulfhydrylase FUB7, enabling a spontaneous electrocyclization to close the carbon backbone of fusaric acid. Dihydrofusaric acid is likely to be released via reduction by the thioester reductase (TR) domain of FUB8 whereupon the final oxidation to fusaric acid may (also) be performed by the FMN-dependent dehydrogenase FUB9. This Gibberella moniliformis (strain M3125 / FGSC 7600) (Maize ear and stalk rot fungus) protein is Fusaric acid biosynthesis protein 2.